Consider the following 424-residue polypeptide: 5-methylthioadenosine/S-adenosylhomocysteine deaminase (424 aa).

His-60 and His-62 together coordinate Zn(2+). Residues Glu-89 and His-181 each contribute to the substrate site. Zn(2+) is bound at residue His-208. 2 residues coordinate substrate: Glu-211 and Asp-296. Asp-296 lines the Zn(2+) pocket.

Belongs to the metallo-dependent hydrolases superfamily. MTA/SAH deaminase family. Zn(2+) serves as cofactor.

It catalyses the reaction S-adenosyl-L-homocysteine + H2O + H(+) = S-inosyl-L-homocysteine + NH4(+). It carries out the reaction S-methyl-5'-thioadenosine + H2O + H(+) = S-methyl-5'-thioinosine + NH4(+). Catalyzes the deamination of 5-methylthioadenosine and S-adenosyl-L-homocysteine into 5-methylthioinosine and S-inosyl-L-homocysteine, respectively. Is also able to deaminate adenosine. This is 5-methylthioadenosine/S-adenosylhomocysteine deaminase from Thermococcus onnurineus (strain NA1).